Reading from the N-terminus, the 454-residue chain is Notoamide E oxidase notB (454 aa).

A helical membrane pass occupies residues 15-35 (SPAELTVIIVGLGIAGLTAAI). Residues E48 and G61 each contribute to the FAD site. N-linked (GlcNAc...) asparagine glycosylation occurs at N75. R121 is an FAD binding site. Catalysis depends on residues R199 and Y229. D322 and G335 together coordinate FAD.

This sequence belongs to the paxM FAD-dependent monooxygenase family. It depends on FAD as a cofactor.

It localises to the membrane. The catalysed reaction is notoamide E + NADPH + O2 + H(+) = notoamide C + NADP(+) + H2O. It carries out the reaction notoamide E + NADPH + O2 + H(+) = notoamide D + NADP(+) + H2O. It participates in alkaloid biosynthesis. Its function is as follows. FAD-dependent monooxygenase; part of the gene cluster that mediates the biosynthesis of notoamide, a fungal indole alkaloid that belongs to a family of natural products containing a characteristic bicyclo[2.2.2]diazaoctane core. The first step of notoamide biosynthesis involves coupling of L-proline and L-tryptophan by the bimodular NRPS notE, to produce cyclo-L-tryptophan-L-proline called brevianamide F. The reverse prenyltransferase notF then acts as a deoxybrevianamide E synthase and converts brevianamide F to deoxybrevianamide E via reverse prenylation at C-2 of the indole ring leading to the bicyclo[2.2.2]diazaoctane core. Deoxybrevianamide E is further hydroxylated at C-6 of the indole ring, likely catalyzed by the cytochrome P450 monooxygenase notG, to yield 6-hydroxy-deoxybrevianamide E. 6-hydroxy-deoxybrevianamide E is a specific substrate of the prenyltransferase notC for normal prenylation at C-7 to produce 6-hydroxy-7-prenyl-deoxybrevianamide, also called notoamide S. As the proposed pivotal branching point in notoamide biosynthesis, notoamide S can be diverted to notoamide E through an oxidative pyran ring closure putatively catalyzed by either notH cytochrome P450 monooxygenase or the notD FAD-linked oxidoreductase. This step would be followed by an indole 2,3-epoxidation-initiated pinacol-like rearrangement catalyzed by the notB FAD-dependent monooxygenase leading to the formation of notoamide C and notoamide D. On the other hand notoamide S is converted to notoamide T by notH (or notD), a bifunctional oxidase that also functions as the intramolecular Diels-Alderase responsible for generation of (+)-notoamide T. To generate antipodal (-)-notoaminide T, notH' (or notD') in Aspergillus versicolor is expected to catalyze a Diels-Alder reaction leading to the opposite stereochemistry. The remaining oxidoreductase notD (or notH) likely catalyzes the oxidative pyran ring formation to yield (+)-stephacidin A. The FAD-dependent monooxygenase notI is highly similar to notB and is predicted to catalyze a similar conversion from (+)-stephacidin A to (-)-notoamide B via the 2,3-epoxidation of (+)-stephacidin A followed by a pinacol-type rearrangement. Finally, it remains unclear which enzyme could be responsible for the final hydroxylation steps leading to notoamide A and sclerotiamide. This chain is Notoamide E oxidase notB, found in Aspergillus sp. (strain MF297-2).